We begin with the raw amino-acid sequence, 213 residues long: ATP synthase peripheral stalk subunit OSCP, mitochondrial (213 aa).

A mitochondrion-targeting transit peptide spans 1 to 23 (MAAPAVSGFSRQVRCFSTSVVRP). The SIFI-degron motif lies at 5-23 (AVSGFSRQVRCFSTSVVRP). N6-acetyllysine is present on residues lysine 54, lysine 60, lysine 70, and lysine 73. Lysine 90 bears the N6-succinyllysine mark. 2 positions are modified to N6-acetyllysine; alternate: lysine 100 and lysine 158. N6-succinyllysine; alternate occurs at positions 100 and 158. N6-acetyllysine occurs at positions 172, 176, and 192. At lysine 199 the chain carries N6-succinyllysine.

It belongs to the ATPase delta chain family. In terms of assembly, component of the ATP synthase complex composed at least of ATP5F1A/subunit alpha, ATP5F1B/subunit beta, ATP5MC1/subunit c (homooctomer), MT-ATP6/subunit a, MT-ATP8/subunit 8, ATP5ME/subunit e, ATP5MF/subunit f, ATP5MG/subunit g, ATP5MK/subunit k, ATP5MJ/subunit j, ATP5F1C/subunit gamma, ATP5F1D/subunit delta, ATP5F1E/subunit epsilon, ATP5PF/subunit F6, ATP5PB/subunit b, ATP5PD/subunit d, ATP5PO/subunit OSCP. ATP synthase complex consists of a soluble F(1) head domain (subunits alpha(3) and beta(3)) - the catalytic core - and a membrane F(0) domain - the membrane proton channel (subunits c, a, 8, e, f, g, k and j). These two domains are linked by a central stalk (subunits gamma, delta, and epsilon) rotating inside the F1 region and a stationary peripheral stalk (subunits F6, b, d, and OSCP). In response to mitochondrial stress, the precursor protein is ubiquitinated by the SIFI complex in the cytoplasm before mitochondrial import, leading to its degradation. Within the SIFI complex, UBR4 initiates ubiquitin chain that are further elongated or branched by KCMF1.

It is found in the mitochondrion. The protein resides in the mitochondrion inner membrane. Subunit OSCP, of the mitochondrial membrane ATP synthase complex (F(1)F(0) ATP synthase or Complex V) that produces ATP from ADP in the presence of a proton gradient across the membrane which is generated by electron transport complexes of the respiratory chain. ATP synthase complex consist of a soluble F(1) head domain - the catalytic core - and a membrane F(1) domain - the membrane proton channel. These two domains are linked by a central stalk rotating inside the F(1) region and a stationary peripheral stalk. During catalysis, ATP synthesis in the catalytic domain of F(1) is coupled via a rotary mechanism of the central stalk subunits to proton translocation. In vivo, can only synthesize ATP although its ATP hydrolase activity can be activated artificially in vitro. Part of the complex F(0) domain. Part of the complex F(0) domain and the peripheric stalk, which acts as a stator to hold the catalytic alpha(3)beta(3) subcomplex and subunit a/ATP6 static relative to the rotary elements. The chain is ATP synthase peripheral stalk subunit OSCP, mitochondrial from Rhinolophus ferrumequinum (Greater horseshoe bat).